The following is a 442-amino-acid chain: Glycoprotein endo-alpha-1,2-mannosidase-like protein (442 aa).

Residues 1-8 (MNRLRRKA) lie on the Cytoplasmic side of the membrane. Residues 9-29 (CVALLLFTLFIFGTMMGLRTL) form a helical; Signal-anchor for type II membrane protein membrane-spanning segment. Residues 30 to 442 (KPTDGFSDLA…FSKEKEQWLM (413 aa)) are Lumenal-facing.

It belongs to the glycosyl hydrolase 99 family.

It is found in the golgi apparatus membrane. In Danio rerio (Zebrafish), this protein is Glycoprotein endo-alpha-1,2-mannosidase-like protein (maneal).